Reading from the N-terminus, the 409-residue chain is MASGKAAGKTDAPTPVIKLGGPKPPKVGSSGNVSWFQAIKAKKLNSPPPKFEGSGVPDNENLKPSQQHGYWRRQARFKPGKGGRKPVPDAWYFYYTGTGPAANLNWGDSQDGIVWVAGKGADTKFRSNQGTRDSDKFDQYPLRFSDGGPDGNFRWDFIPLNRGRSGRSTAASSAASSRAPSREVSRGRRSGSEDDLIARAARIIQDQQKKGSRITKAKADEMAHRRYCKRTIPPNYKVDQVFGPRTKGKEGNFGDDKMNEEGIKDGRVTAMLNLVPSSHACLFGSRVTPRLQPDGLHLKFEFTTVVPRDDPQFDNYVKICDQCVDGVGTRPKDDEPRPKSRSSSRPATRGNSPAPRQQRPKKEKKPKKQDDEVDKALTSDEERNNAQLEFDDEPKVINWGDSALGENEL.

4 disordered regions span residues 1-31 (MASG…GSSG), 44-84 (LNSP…KGGR), 164-196 (RSGR…EDDL), and 238-258 (VDQV…DDKM). Residues 15–31 (PVIKLGGPKPPKVGSSG) show a composition bias toward low complexity. Residues 29–160 (SSGNVSWFQA…GNFRWDFIPL (132 aa)) are RNA-binding. The 126-residue stretch at 31 to 156 (GNVSWFQAIK…GGPDGNFRWD (126 aa)) folds into the CoV N NTD domain. A compositionally biased stretch (basic residues) spans 70–84 (YWRRQARFKPGKGGR). Positions 166 to 179 (GRSTAASSAASSRA) are enriched in low complexity. Composition is skewed to basic and acidic residues over residues 180–192 (PSRE…RSGS) and 247–258 (KGKEGNFGDDKM). Ser190 and Ser192 each carry phosphoserine; by host. A CoV N CTD domain is found at 215–331 (TKAKADEMAH…QCVDGVGTRP (117 aa)). Residues 226 to 333 (RYCKRTIPPN…VDGVGTRPKD (108 aa)) are dimerization. The cysteines at positions 320 and 323 are disulfide-linked. The segment at 326 to 409 (GVGTRPKDDE…GDSALGENEL (84 aa)) is disordered. The span at 358–367 (QRPKKEKKPK) shows a compositional bias: basic residues. Basic and acidic residues predominate over residues 368–384 (KQDDEVDKALTSDEERN). A Phosphothreonine; by host modification is found at Thr378. Phosphoserine; by host is present on Ser379.

The protein belongs to the gammacoronavirus nucleocapsid protein family. As to quaternary structure, homooligomer. Both monomeric and oligomeric forms interact with RNA. Interacts with protein M. Interacts with NSP3; this interaction serves to tether the genome to the newly translated replicase-transcriptase complex at a very early stage of infection. Post-translationally, ADP-ribosylated. The ADP-ribosylation is retained in the virion during infection. In terms of processing, phosphorylated on serine and threonine residues.

It is found in the virion. Its subcellular location is the host endoplasmic reticulum-Golgi intermediate compartment. The protein resides in the host Golgi apparatus. Functionally, packages the positive strand viral genome RNA into a helical ribonucleocapsid (RNP) and plays a fundamental role during virion assembly through its interactions with the viral genome and membrane protein M. Plays an important role in enhancing the efficiency of subgenomic viral RNA transcription as well as viral replication. The chain is Nucleoprotein from Gallus gallus (Chicken).